Consider the following 276-residue polypeptide: Aldo-keto reductase Mkms_1985 (276 aa).

The active-site Proton donor is the Y50. L190, I228, K230, S231, V232, R236, S239, and N240 together coordinate NADPH. The disordered stretch occupies residues 257-276 (SSLEDGSRLGPDPKTFNFTG).

This sequence belongs to the aldo/keto reductase family.

The chain is Aldo-keto reductase Mkms_1985 from Mycobacterium sp. (strain KMS).